Reading from the N-terminus, the 227-residue chain is Cytochrome c oxidase subunit 2 (227 aa).

The Mitochondrial intermembrane portion of the chain corresponds to 1 to 14 (MAHPVQLSLQDATS). A helical transmembrane segment spans residues 15 to 45 (PVMEELITFHDHAFMAMSLISFLVLYALLST). Over 46-59 (LTTKLTNTSITDAQ) the chain is Mitochondrial matrix. The chain crosses the membrane as a helical span at residues 60 to 87 (EMETIWTILPAIILILIALPSLRILYLT). The Mitochondrial intermembrane segment spans residues 88 to 227 (DEVNDPSFTI…IFEMGPVLTL (140 aa)). Residues His161, Cys196, Glu198, Cys200, His204, and Met207 each coordinate Cu cation. Glu198 serves as a coordination point for Mg(2+).

It belongs to the cytochrome c oxidase subunit 2 family. In terms of assembly, component of the cytochrome c oxidase (complex IV, CIV), a multisubunit enzyme composed of 14 subunits. The complex is composed of a catalytic core of 3 subunits MT-CO1, MT-CO2 and MT-CO3, encoded in the mitochondrial DNA, and 11 supernumerary subunits COX4I, COX5A, COX5B, COX6A, COX6B, COX6C, COX7A, COX7B, COX7C, COX8 and NDUFA4, which are encoded in the nuclear genome. The complex exists as a monomer or a dimer and forms supercomplexes (SCs) in the inner mitochondrial membrane with NADH-ubiquinone oxidoreductase (complex I, CI) and ubiquinol-cytochrome c oxidoreductase (cytochrome b-c1 complex, complex III, CIII), resulting in different assemblies (supercomplex SCI(1)III(2)IV(1) and megacomplex MCI(2)III(2)IV(2)). Found in a complex with TMEM177, COA6, COX18, COX20, SCO1 and SCO2. Interacts with TMEM177 in a COX20-dependent manner. Interacts with COX20. Interacts with COX16. Cu cation serves as cofactor.

It localises to the mitochondrion inner membrane. The enzyme catalyses 4 Fe(II)-[cytochrome c] + O2 + 8 H(+)(in) = 4 Fe(III)-[cytochrome c] + 2 H2O + 4 H(+)(out). Component of the cytochrome c oxidase, the last enzyme in the mitochondrial electron transport chain which drives oxidative phosphorylation. The respiratory chain contains 3 multisubunit complexes succinate dehydrogenase (complex II, CII), ubiquinol-cytochrome c oxidoreductase (cytochrome b-c1 complex, complex III, CIII) and cytochrome c oxidase (complex IV, CIV), that cooperate to transfer electrons derived from NADH and succinate to molecular oxygen, creating an electrochemical gradient over the inner membrane that drives transmembrane transport and the ATP synthase. Cytochrome c oxidase is the component of the respiratory chain that catalyzes the reduction of oxygen to water. Electrons originating from reduced cytochrome c in the intermembrane space (IMS) are transferred via the dinuclear copper A center (CU(A)) of subunit 2 and heme A of subunit 1 to the active site in subunit 1, a binuclear center (BNC) formed by heme A3 and copper B (CU(B)). The BNC reduces molecular oxygen to 2 water molecules using 4 electrons from cytochrome c in the IMS and 4 protons from the mitochondrial matrix. This Macaca mulatta (Rhesus macaque) protein is Cytochrome c oxidase subunit 2 (MT-CO2).